Here is a 121-residue protein sequence, read N- to C-terminus: Small ribosomal subunit protein bS16m (121 aa).

This sequence belongs to the bacterial ribosomal protein bS16 family. As to quaternary structure, component of the mitochondrial small ribosomal subunit (mt-SSU). Mature yeast 74S mitochondrial ribosomes consist of a small (37S) and a large (54S) subunit. The 37S small subunit contains a 15S ribosomal RNA (15S mt-rRNA) and 34 different proteins. The 54S large subunit contains a 21S rRNA (21S mt-rRNA) and 46 different proteins.

Its subcellular location is the mitochondrion. Its function is as follows. Component of the mitochondrial ribosome (mitoribosome), a dedicated translation machinery responsible for the synthesis of mitochondrial genome-encoded proteins, including at least some of the essential transmembrane subunits of the mitochondrial respiratory chain. The mitoribosomes are attached to the mitochondrial inner membrane and translation products are cotranslationally integrated into the membrane. This Saccharomyces cerevisiae (strain ATCC 204508 / S288c) (Baker's yeast) protein is Small ribosomal subunit protein bS16m (MRPS16).